The sequence spans 245 residues: tRNA1(Val) (adenine(37)-N6)-methyltransferase (245 aa).

It belongs to the methyltransferase superfamily. tRNA (adenine-N(6)-)-methyltransferase family.

Its subcellular location is the cytoplasm. It carries out the reaction adenosine(37) in tRNA1(Val) + S-adenosyl-L-methionine = N(6)-methyladenosine(37) in tRNA1(Val) + S-adenosyl-L-homocysteine + H(+). Functionally, specifically methylates the adenine in position 37 of tRNA(1)(Val) (anticodon cmo5UAC). In Shigella dysenteriae serotype 1 (strain Sd197), this protein is tRNA1(Val) (adenine(37)-N6)-methyltransferase.